A 375-amino-acid polypeptide reads, in one-letter code: Succinyl-diaminopimelate desuccinylase (375 aa).

H66 contributes to the Zn(2+) binding site. The active site involves D68. D99 is a Zn(2+) binding site. Catalysis depends on E133, which acts as the Proton acceptor. Residues E134, E162, and H348 each contribute to the Zn(2+) site.

Belongs to the peptidase M20A family. DapE subfamily. Homodimer. The cofactor is Zn(2+). Co(2+) is required as a cofactor.

The catalysed reaction is N-succinyl-(2S,6S)-2,6-diaminopimelate + H2O = (2S,6S)-2,6-diaminopimelate + succinate. The protein operates within amino-acid biosynthesis; L-lysine biosynthesis via DAP pathway; LL-2,6-diaminopimelate from (S)-tetrahydrodipicolinate (succinylase route): step 3/3. Functionally, catalyzes the hydrolysis of N-succinyl-L,L-diaminopimelic acid (SDAP), forming succinate and LL-2,6-diaminopimelate (DAP), an intermediate involved in the bacterial biosynthesis of lysine and meso-diaminopimelic acid, an essential component of bacterial cell walls. The polypeptide is Succinyl-diaminopimelate desuccinylase (Stenotrophomonas maltophilia (strain K279a)).